The chain runs to 715 residues: Palmitoyltransferase ZDHHC5 (715 aa).

Topologically, residues 1–13 (MPAESGKRFKPSK) are cytoplasmic. A helical membrane pass occupies residues 14–34 (YVPVSAAAIFLVGATTLFFAF). The Extracellular segment spans residues 35–52 (TCPGLSLDVSPAVPIYNA). A helical transmembrane segment spans residues 53–73 (IMFLFVLANFSMATFMDPGIF). Residues 74-148 (PRAEEDEDKE…NCIGRRNYRY (75 aa)) lie on the Cytoplasmic side of the membrane. Residue Tyr-91 is modified to Phosphotyrosine. Residues 104–154 (KWCATCRFYRPPRCSHCSVCDNCVEEFDHHCPWVNNCIGRRNYRYFFLFLL) enclose the DHHC domain. Cys-134 functions as the S-palmitoyl cysteine intermediate in the catalytic mechanism. The helical transmembrane segment at 149-169 (FFLFLLSLTAHIMGVFGFGLL) threads the bilayer. Residues 170-191 (YVLCHIEELSGVRTAVTMAVMC) lie on the Extracellular side of the membrane. A helical transmembrane segment spans residues 192–212 (VAGLFFIPVAGLTGFHVVLVA). The Cytoplasmic portion of the chain corresponds to 213-715 (RGRTTNEQVT…VGGTTYEISV (503 aa)). Ser-247 bears the Phosphoserine mark. Positions 289–715 (GELRRTKSKG…VGGTTYEISV (427 aa)) are disordered. Thr-294 is modified (phosphothreonine). Residues Ser-296 and Ser-299 each carry the phosphoserine modification. Thr-303 carries the post-translational modification Phosphothreonine. Ser-345 is subject to Phosphoserine. Phosphothreonine is present on residues Thr-348 and Thr-350. Low complexity predominate over residues 359–373 (SSSSTSAAMPHSSSA). Phosphoserine occurs at positions 380, 398, 406, and 409. Residue Thr-411 is modified to Phosphothreonine. A phosphoserine mark is found at Ser-415, Ser-425, Ser-429, and Ser-432. The segment covering 422 to 432 (SSGSRSSSLKS) has biased composition (low complexity). Thr-436 carries the post-translational modification Phosphothreonine. The span at 442–478 (QLQSIRSEGTTSTSYKSLANQTRNGSLSYDSLLTPSD) shows a compositional bias: polar residues. A phosphoserine mark is found at Ser-529 and Ser-554. The span at 581 to 597 (PRTSSSSDDSKRSPLSK) shows a compositional bias: low complexity. Omega-N-methylarginine is present on Arg-617. Ser-621 carries the post-translational modification Phosphoserine. Thr-659 is subject to Phosphothreonine. The segment covering 666 to 677 (LKTTYSKSNGQP) has biased composition (polar residues). 2 positions are modified to phosphoserine: Ser-684 and Ser-694. Residue Arg-697 is modified to Omega-N-methylarginine.

The protein belongs to the DHHC palmitoyltransferase family. ERF2/ZDHHC9 subfamily. Autopalmitoylated. Palmitoylation of the C-terminal tail regulates stimulation-dependent plasma membrane motility. Post-translationally, phosphorylation regulates association with endocytic proteins and its subcellular localization. Phosphorylation by LYN during fatty acid uptake leads to inactivation of the activity.

The protein localises to the cell membrane. It catalyses the reaction L-cysteinyl-[protein] + hexadecanoyl-CoA = S-hexadecanoyl-L-cysteinyl-[protein] + CoA. Palmitoyltransferase that catalyzes the addition of palmitate onto various protein substrates such as CTNND2, CD36, GSDMD, NLRP3, NOD1, NOD2, STAT3 and S1PR1 thus plays a role in various biological processes including cell adhesion, inflammation, fatty acid uptake, bacterial sensing or cardiac functions. Plays an important role in the regulation of synapse efficacy by mediating palmitoylation of delta-catenin/CTNND2, thereby increasing synaptic delivery and surface stabilization of alpha-amino-3-hydroxy-5-methyl-4-isoxazole propionic acid receptors (AMPARs). Under basal conditions, remains at the synaptic membrane through FYN-mediated phosphorylation that prevents association with endocytic proteins. Neuronal activity enhances the internalization and trafficking of DHHC5 from spines to dendritic shafts where it palmitoylates delta-catenin/CTNND2. Regulates cell adhesion at the plasma membrane by palmitoylating GOLGA7B and DSG2. Plays a role in innate immune response by mediating the palmitoylation of NOD1 and NOD2 and their proper recruitment to the bacterial entry site and phagosomes. Also participates in fatty acid uptake by palmitoylating CD36 and thereby targeting it to the plasma membrane. Upon binding of fatty acids to CD36, gets phosphorylated by LYN leading to inactivation and subsequent CD36 caveolar endocytosis. Controls oligodendrocyte development by catalyzing STAT3 palmitoylation. Acts as a regulator of inflammatory response by mediating palmitoylation of NLRP3 and GSDMD. Palmitoylates NLRP3 to promote inflammasome assembly and activation. Activates pyroptosis by catalyzing palmitoylation of gasdermin-D (GSDMD), thereby promoting membrane translocation and pore formation of GSDMD. This chain is Palmitoyltransferase ZDHHC5 (Zdhhc5), found in Rattus norvegicus (Rat).